The following is a 375-amino-acid chain: Aminomethyltransferase (375 aa).

Belongs to the GcvT family. The glycine cleavage system is composed of four proteins: P, T, L and H.

It catalyses the reaction N(6)-[(R)-S(8)-aminomethyldihydrolipoyl]-L-lysyl-[protein] + (6S)-5,6,7,8-tetrahydrofolate = N(6)-[(R)-dihydrolipoyl]-L-lysyl-[protein] + (6R)-5,10-methylene-5,6,7,8-tetrahydrofolate + NH4(+). Its function is as follows. The glycine cleavage system catalyzes the degradation of glycine. In Cupriavidus taiwanensis (strain DSM 17343 / BCRC 17206 / CCUG 44338 / CIP 107171 / LMG 19424 / R1) (Ralstonia taiwanensis (strain LMG 19424)), this protein is Aminomethyltransferase.